We begin with the raw amino-acid sequence, 165 residues long: Peptidyl-prolyl cis-trans isomerase A (165 aa).

Met1 carries the N-acetylmethionine modification. Val2 is modified (N-acetylvaline; in Peptidyl-prolyl cis-trans isomerase A, N-terminally processed). The PPIase cyclophilin-type domain maps to 7–163 (FFDIAVDGEP…KKITIADCGQ (157 aa)). Lys28 carries the N6-acetyllysine; alternate modification. A Glycyl lysine isopeptide (Lys-Gly) (interchain with G-Cter in SUMO2); alternate cross-link involves residue Lys28. A Glycyl lysine isopeptide (Lys-Gly) (interchain with G-Cter in ubiquitin); alternate cross-link involves residue Lys28. N6-acetyllysine is present on residues Lys44 and Lys76. Position 77 is a phosphoserine (Ser77). Residue Lys82 is modified to N6-acetyllysine; alternate. Lys82 is covalently cross-linked (Glycyl lysine isopeptide (Lys-Gly) (interchain with G-Cter in SUMO2); alternate). Thr93 is subject to Phosphothreonine. Asn108 carries N-linked (GlcNAc...) asparagine glycosylation. Residues Lys125, Lys131, and Lys133 each carry the N6-acetyllysine modification.

This sequence belongs to the cyclophilin-type PPIase family. PPIase A subfamily. Interacts with protein phosphatase PPP3CA/calcineurin A. Interacts with isoform 2 of BSG/CD147. Interacts with FOXO1; the interaction promotes FOXO1 dephosphorylation, nuclear accumulation and transcriptional activity. Interacts with integrin ITGA2B:ITGB3; the interaction is ROS and peptidyl-prolyl cis-trans isomerase (PPIase) activity-dependent and is increased in the presence of thrombin. Interacts with MAP3K5. Interacts with TARDBP; the interaction is dependent on the RNA-binding activity of TARDBP and the PPIase activity of PPIA/CYPA and the acetylation of PPIA/CYPA at Lys-125 favors the interaction. Interacts with HNRNPA1, HNRNPA2B1, HNRNPC, RBMX, HNRNPK and HNRNPM. In terms of processing, acetylation at Lys-125 markedly inhibits catalysis of cis to trans isomerization. PPIA acetylation also antagonizes the immunosuppressive effects of cyclosporine by inhibiting the sequential steps of cyclosporine binding and calcineurin inhibition. Acetylation at Lys-125 favors the interaction with TARDBP.

It is found in the cytoplasm. Its subcellular location is the secreted. The protein localises to the nucleus. It catalyses the reaction [protein]-peptidylproline (omega=180) = [protein]-peptidylproline (omega=0). Binds cyclosporin A (CsA). CsA mediates some of its effects via an inhibitory action on PPIase. Functionally, catalyzes the cis-trans isomerization of proline imidic peptide bonds in oligopeptides. Exerts a strong chemotactic effect on leukocytes partly through activation of one of its membrane receptors BSG/CD147, initiating a signaling cascade that culminates in MAPK/ERK activation. Activates endothelial cells (ECs) in a proinflammatory manner by stimulating activation of NF-kappa-B and ERK, JNK and p38 MAP-kinases and by inducing expression of adhesion molecules including SELE and VCAM1. Induces apoptosis in ECs by promoting the FOXO1-dependent expression of CCL2 and BCL2L11 which are involved in EC chemotaxis and apoptosis. In response to oxidative stress, initiates proapoptotic and antiapoptotic signaling in ECs via activation of NF-kappa-B and AKT1 and up-regulation of antiapoptotic protein BCL2. Negatively regulates MAP3K5/ASK1 kinase activity, autophosphorylation and oxidative stress-induced apoptosis mediated by MAP3K5/ASK1. Necessary for the assembly of TARDBP in heterogeneous nuclear ribonucleoprotein (hnRNP) complexes and regulates TARDBP binding to RNA UG repeats and TARDBP-dependent expression of HDAC6, ATG7 and VCP which are involved in clearance of protein aggregates. Plays an important role in platelet activation and aggregation. Regulates calcium mobilization and integrin ITGA2B:ITGB3 bidirectional signaling via increased ROS production as well as by facilitating the interaction between integrin and the cell cytoskeleton. Binds heparan sulfate glycosaminoglycans. The chain is Peptidyl-prolyl cis-trans isomerase A (PPIA) from Symphalangus syndactylus (Siamang).